The primary structure comprises 90 residues: [Phe8]-phyllolitorin (90 aa).

The first 30 residues, 1–30, serve as a signal peptide directing secretion; sequence MSAVPFTRVLLISGFLAHLLLSTFVTLTVC. Residues 31–48 constitute a propeptide that is removed on maturation; sequence KEVTEESDDLSKRNVLQR. At glutamine 49 the chain carries Pyrrolidone carboxylic acid. Methionine 57 carries the methionine amide modification. Residues 61 to 90 constitute a propeptide that is removed on maturation; the sequence is SLENTNRRSDEDMEISALFRGSPLKVKRSD.

It belongs to the bombesin/neuromedin-B/ranatensin family. As to expression, expressed by the skin glands.

The protein localises to the secreted. This is [Phe8]-phyllolitorin from Phyllomedusa sauvagei (Sauvage's leaf frog).